A 468-amino-acid chain; its full sequence is tRNA (guanine(37)-N(1))-methyltransferase 1 (468 aa).

Residues histidine 207, 245–246, and 273–274 each bind S-adenosyl-L-methionine; these read DL and DA. The tract at residues 301–348 is disordered; the sequence is KEAAVSRGGETNSSGEEIRESNASINEPLGANKKPSGTTKTENGVGKD. Residues 309–325 are compositionally biased toward polar residues; sequence GETNSSGEEIRESNASI. Asparagine 380 serves as a coordination point for S-adenosyl-L-methionine.

It belongs to the class I-like SAM-binding methyltransferase superfamily. TRM5/TYW2 family. As to quaternary structure, monomer.

The protein localises to the mitochondrion matrix. It is found in the nucleus. Its subcellular location is the cytoplasm. The enzyme catalyses guanosine(37) in tRNA + S-adenosyl-L-methionine = N(1)-methylguanosine(37) in tRNA + S-adenosyl-L-homocysteine + H(+). In terms of biological role, specifically methylates the N1 position of guanosine-37 in various cytoplasmic and mitochondrial tRNAs. Methylation is not dependent on the nature of the nucleoside 5' of the target nucleoside. This is the first step in the biosynthesis of wybutosine (yW), a modified base adjacent to the anticodon of tRNAs and required for accurate decoding. This Arabidopsis thaliana (Mouse-ear cress) protein is tRNA (guanine(37)-N(1))-methyltransferase 1.